The sequence spans 766 residues: Deoxynucleotidyltransferase terminal-interacting protein 2 (766 aa).

A disordered region spans residues 1-99 (MVVTRSARPQ…DCSSVPEVQD (99 aa)). Polar residues-rich tracts occupy residues 13–28 (NEAT…NSAV) and 42–56 (SPDN…TTPE). Threonine 127 carries the phosphothreonine modification. Serine 139, serine 143, and serine 146 each carry phosphoserine. Residues 155–175 (TEITTRRSKAKSQREPKQESH) form a disordered region. Over residues 166-175 (SQREPKQESH) the composition is skewed to basic and acidic residues. 2 positions are modified to phosphoserine: serine 180 and serine 190. Lysine 217 participates in a covalent cross-link: Glycyl lysine isopeptide (Lys-Gly) (interchain with G-Cter in SUMO2). Residue threonine 229 is modified to Phosphothreonine. Phosphoserine is present on residues serine 236, serine 248, and serine 250. Residue lysine 254 forms a Glycyl lysine isopeptide (Lys-Gly) (interchain with G-Cter in SUMO2) linkage. Serine 258 is modified (phosphoserine). A Glycyl lysine isopeptide (Lys-Gly) (interchain with G-Cter in SUMO2) cross-link involves residue lysine 327. At serine 334 the chain carries Phosphoserine. Disordered stretches follow at residues 345 to 367 (VSQR…LNHE), 390 to 450 (KNAI…KDDS), and 520 to 557 (KAGE…DEDN). Residue lysine 394 forms a Glycyl lysine isopeptide (Lys-Gly) (interchain with G-Cter in SUMO2) linkage. The span at 421–434 (DMSKEKEVDSESDT) shows a compositional bias: basic and acidic residues. Positions 435 to 444 (KPSNLEFNTT) are enriched in polar residues. The stretch at 515–552 (LDEEDKAGEVATEEEEEEEEEESEEELSDHDRNKDNEF) forms a coiled coil. Positions 520 to 542 (KAGEVATEEEEEEEEEESEEELS) are enriched in acidic residues. A tdBR region; mediates interaction with DNTT region spans residues 558 to 615 (LLSNTKSKLLKLMSSSIDTGLNIKELGGLYINFNADKVQLNKRTLTQMKEKRKDELLQ). Glycyl lysine isopeptide (Lys-Gly) (interchain with G-Cter in SUMO2) cross-links involve residues lysine 568, lysine 594, and lysine 616. Phosphothreonine is present on threonine 620. Glycyl lysine isopeptide (Lys-Gly) (interchain with G-Cter in SUMO2) cross-links involve residues lysine 636, lysine 659, lysine 668, lysine 696, and lysine 741.

In terms of assembly, forms a ternary complex with DNTT and core histone; interaction with PCNA releases DNTT and H2A/H2B histones from this ternary complex. Interacts with ESR1, ESR2, PPARG and RXRA. Part of the small subunit (SSU) processome, composed of more than 70 proteins and the RNA chaperone small nucleolar RNA (snoRNA) U3.

The protein localises to the nucleus. It is found in the nucleolus. Functionally, regulates the transcriptional activity of DNTT and ESR1. May function as a chromatin remodeling protein. Part of the small subunit (SSU) processome, first precursor of the small eukaryotic ribosomal subunit. During the assembly of the SSU processome in the nucleolus, many ribosome biogenesis factors, an RNA chaperone and ribosomal proteins associate with the nascent pre-rRNA and work in concert to generate RNA folding, modifications, rearrangements and cleavage as well as targeted degradation of pre-ribosomal RNA by the RNA exosome. The polypeptide is Deoxynucleotidyltransferase terminal-interacting protein 2 (DNTTIP2) (Bos taurus (Bovine)).